We begin with the raw amino-acid sequence, 460 residues long: tRNA(Ile)-lysidine synthase (460 aa).

Residue 37-42 (SGGADS) participates in ATP binding.

Belongs to the tRNA(Ile)-lysidine synthase family.

The protein resides in the cytoplasm. It carries out the reaction cytidine(34) in tRNA(Ile2) + L-lysine + ATP = lysidine(34) in tRNA(Ile2) + AMP + diphosphate + H(+). Ligates lysine onto the cytidine present at position 34 of the AUA codon-specific tRNA(Ile) that contains the anticodon CAU, in an ATP-dependent manner. Cytidine is converted to lysidine, thus changing the amino acid specificity of the tRNA from methionine to isoleucine. The sequence is that of tRNA(Ile)-lysidine synthase from Treponema denticola (strain ATCC 35405 / DSM 14222 / CIP 103919 / JCM 8153 / KCTC 15104).